Here is a 261-residue protein sequence, read N- to C-terminus: Thiamine thiazole synthase (261 aa).

Residues Ser-33, 52–53 (ER), Gly-60, Val-124, and 152–154 (HVD) contribute to the NAD(+) site. Positions 154 and 169 each coordinate Fe cation. Residue Met-219 participates in NAD(+) binding. Arg-229 provides a ligand contact to glycine.

It belongs to the THI4 family. Homooctamer; tetramer of dimers. The cofactor is Fe(2+).

The catalysed reaction is hydrogen sulfide + glycine + NAD(+) = ADP-5-ethyl-4-methylthiazole-2-carboxylate + nicotinamide + 3 H2O + H(+). It participates in cofactor biosynthesis; thiamine diphosphate biosynthesis. Functionally, involved in the biosynthesis of the thiazole moiety of thiamine. Catalyzes the conversion of NAD and glycine to adenosine diphosphate 5-(2-hydroxyethyl)-4-methylthiazole-2-carboxylate (ADT), an adenylated thiazole intermediate, using free sulfide as a source of sulfur. This is Thiamine thiazole synthase from Pyrobaculum arsenaticum (strain DSM 13514 / JCM 11321 / PZ6).